Consider the following 126-residue polypeptide: RutC family protein bbp_334 (126 aa).

This sequence belongs to the RutC family.

This chain is RutC family protein bbp_334, found in Buchnera aphidicola subsp. Baizongia pistaciae (strain Bp).